The sequence spans 172 residues: MILSGKEIKNRLNKDIFIEPFSDNQLNPNSYNLRLHNELLVYENNVLDMKKENKAKKITIPEEGLLLEPGKLYLGRTIEHTRTEKLVPMLEGRSSVGRLGLFIHITAGFGDIGFSGFWTLEIFCVQPIRIYPNIEICQIYYHNIEGEYEKYTSGKYQNNTGVQPSLLFKDFE.

Residues 93–98 (RSSVGR), Asp111, 119–121 (TLE), Gln138, and Tyr151 contribute to the dCTP site. The Proton donor/acceptor role is filled by Glu121.

Belongs to the dCTP deaminase family. Homotrimer.

It carries out the reaction dCTP + 2 H2O = dUMP + NH4(+) + diphosphate. The protein operates within pyrimidine metabolism; dUMP biosynthesis; dUMP from dCTP: step 1/1. Its function is as follows. Bifunctional enzyme that catalyzes both the deamination of dCTP to dUTP and the hydrolysis of dUTP to dUMP without releasing the toxic dUTP intermediate. This chain is dCTP deaminase, dUMP-forming, found in Hathewaya histolytica (Clostridium histolyticum).